Here is a 339-residue protein sequence, read N- to C-terminus: Serpentine receptor class alpha-22 (339 aa).

6 consecutive transmembrane segments (helical) span residues 33 to 53 (IFIS…IQAL), 110 to 130 (VVDL…VFSL), 150 to 170 (FIAI…FYIA), 199 to 219 (VRTM…YLSV), 250 to 270 (IFII…NLLL), and 284 to 304 (IALF…VIYF).

This sequence belongs to the nematode receptor-like protein sra family.

Its subcellular location is the membrane. The chain is Serpentine receptor class alpha-22 (sra-22) from Caenorhabditis elegans.